The primary structure comprises 406 residues: Protein ALP1-like (406 aa).

Positions 8 to 15 (KKKKRAEK) match the Nuclear localization signal motif. Residues 187–353 (IDITHIVMNL…IIFVCCLLHN (167 aa)) form the DDE Tnp4 domain. 3 residues coordinate a divalent metal cation: Asp188, Asp240, and Asp279.

The protein belongs to the HARBI1 family. It depends on a divalent metal cation as a cofactor.

It is found in the nucleus. Its function is as follows. Transposase-derived protein that may have nuclease activity. In Arabidopsis thaliana (Mouse-ear cress), this protein is Protein ALP1-like.